The chain runs to 329 residues: MSVLEESRPFAQQLFNVYFTILSLFCFKLFVKISLAILSHFYIVKGNRKEAARIAAEFYGVTQGQGSWADRSPLHEAASQGRLLALRTLLSQGYNVNAVTIDHITPLHEACLGDHVACARTLLEAGANVNAITIDGVTPLFNACSQGSTSCTELLLEYGAKAQLESCLPSPTHEAASKGHHEFLDLLISWGIDVDQDIPHLGTPLYVACMSQQFHCIWKLLYAGADVQKGKYWDTPLHAAAQQSSTEIVNLLIEFGADINAKNTELLRPVDVATTSSMVERILLQHEATPSSLCQLCRLCIRNYIGRPRLHLIPQLQLPTLLQNFLQYR.

ANK repeat units follow at residues 69–98, 102–131, 135–164, 167–196, 200–229, and 232–261; these read ADRSPLHEAASQGRLLALRTLLSQGYNVNA, DHITPLHEACLGDHVACARTLLEAGANVNA, DGVTPLFNACSQGSTSCTELLLEYGAKAQL, CLPSPTHEAASKGHHEFLDLLISWGIDVDQ, HLGTPLYVACMSQQFHCIWKLLYAGADVQK, and YWDTPLHAAAQQSSTEIVNLLIEFGADINA. The 52-residue stretch at 278–329 folds into the SOCS box domain; sequence MVERILLQHEATPSSLCQLCRLCIRNYIGRPRLHLIPQLQLPTLLQNFLQYR.

This sequence belongs to the ankyrin SOCS box (ASB) family. Expressed in endothelial and smooth muscle cells of collateral arteries as well as in satellite cells.

It participates in protein modification; protein ubiquitination. Its function is as follows. May be a substrate-recognition component of a SCF-like ECS (Elongin-Cullin-SOCS-box protein) E3 ubiquitin-protein ligase complex which mediates the ubiquitination and subsequent proteasomal degradation of target proteins. May play a role in the initiation of arteriogenesis. In Oryctolagus cuniculus (Rabbit), this protein is Ankyrin repeat and SOCS box protein 5 (ASB5).